The following is a 395-amino-acid chain: Glutamyl-tRNA reductase (395 aa).

Residues 45-48 (TCNR), Ser-87, 92-94 (EDQ), and Gln-98 each bind substrate. Cys-46 (nucleophile) is an active-site residue. 167-172 (GAGEMG) serves as a coordination point for NADP(+).

Belongs to the glutamyl-tRNA reductase family. In terms of assembly, homodimer.

It carries out the reaction (S)-4-amino-5-oxopentanoate + tRNA(Glu) + NADP(+) = L-glutamyl-tRNA(Glu) + NADPH + H(+). The protein operates within porphyrin-containing compound metabolism; protoporphyrin-IX biosynthesis; 5-aminolevulinate from L-glutamyl-tRNA(Glu): step 1/2. Its function is as follows. Catalyzes the NADPH-dependent reduction of glutamyl-tRNA(Glu) to glutamate 1-semialdehyde (GSA). In Methanosphaera stadtmanae (strain ATCC 43021 / DSM 3091 / JCM 11832 / MCB-3), this protein is Glutamyl-tRNA reductase.